A 247-amino-acid chain; its full sequence is 3-deoxy-manno-octulosonate cytidylyltransferase (247 aa).

Belongs to the KdsB family.

It is found in the cytoplasm. The catalysed reaction is 3-deoxy-alpha-D-manno-oct-2-ulosonate + CTP = CMP-3-deoxy-beta-D-manno-octulosonate + diphosphate. It participates in nucleotide-sugar biosynthesis; CMP-3-deoxy-D-manno-octulosonate biosynthesis; CMP-3-deoxy-D-manno-octulosonate from 3-deoxy-D-manno-octulosonate and CTP: step 1/1. The protein operates within bacterial outer membrane biogenesis; lipopolysaccharide biosynthesis. Activates KDO (a required 8-carbon sugar) for incorporation into bacterial lipopolysaccharide in Gram-negative bacteria. This chain is 3-deoxy-manno-octulosonate cytidylyltransferase, found in Pelodictyon phaeoclathratiforme (strain DSM 5477 / BU-1).